The chain runs to 194 residues: MYDFLTGIIKTIAAGYVGIDVNGIGFRVFTPNPYEYNQNDQTTIFTEQIVRDNQISLYGFKTVKERNLFQKLLNVSGIGPKSALAIIAGGDRDGLIAAVENGKPKYLTKFPGIGNKTAQQIVLDLKGKLGDFSKNIAPMKNLLENSAELDDALAALVALGFSSKEVNKINPKLASLGELTTDAYIQKGLKLLTK.

The domain I stretch occupies residues 1-61 (MYDFLTGIIK…DNQISLYGFK (61 aa)). The interval 62–139 (TVKERNLFQK…GDFSKNIAPM (78 aa)) is domain II. The flexible linker stretch occupies residues 139–143 (MKNLL). Positions 144–194 (ENSAELDDALAALVALGFSSKEVNKINPKLASLGELTTDAYIQKGLKLLTK) are domain III.

Belongs to the RuvA family. In terms of assembly, homotetramer. Forms an RuvA(8)-RuvB(12)-Holliday junction (HJ) complex. HJ DNA is sandwiched between 2 RuvA tetramers; dsDNA enters through RuvA and exits via RuvB. An RuvB hexamer assembles on each DNA strand where it exits the tetramer. Each RuvB hexamer is contacted by two RuvA subunits (via domain III) on 2 adjacent RuvB subunits; this complex drives branch migration. In the full resolvosome a probable DNA-RuvA(4)-RuvB(12)-RuvC(2) complex forms which resolves the HJ.

It is found in the cytoplasm. The RuvA-RuvB-RuvC complex processes Holliday junction (HJ) DNA during genetic recombination and DNA repair, while the RuvA-RuvB complex plays an important role in the rescue of blocked DNA replication forks via replication fork reversal (RFR). RuvA specifically binds to HJ cruciform DNA, conferring on it an open structure. The RuvB hexamer acts as an ATP-dependent pump, pulling dsDNA into and through the RuvAB complex. HJ branch migration allows RuvC to scan DNA until it finds its consensus sequence, where it cleaves and resolves the cruciform DNA. This Oenococcus oeni (strain ATCC BAA-331 / PSU-1) protein is Holliday junction branch migration complex subunit RuvA.